Reading from the N-terminus, the 444-residue chain is Protein translocase subunit SecY (444 aa).

The next 10 membrane-spanning stretches (helical) occupy residues 24–44 (FFVI…IPGI), 77–97 (ILAL…LLTV), 123–143 (GTLV…PNMV), 153–173 (MFTL…MWLG), 181–201 (IGNG…PKAI), 215–235 (VLLL…VVFM), 269–289 (MAGV…GTLA), 318–338 (YVML…ALVF), 376–396 (LAGA…MVAW), and 400–420 (FYFG…FMAQ).

Belongs to the SecY/SEC61-alpha family. As to quaternary structure, component of the Sec protein translocase complex. Heterotrimer consisting of SecY, SecE and SecG subunits. The heterotrimers can form oligomers, although 1 heterotrimer is thought to be able to translocate proteins. Interacts with the ribosome. Interacts with SecDF, and other proteins may be involved. Interacts with SecA.

Its subcellular location is the cell inner membrane. In terms of biological role, the central subunit of the protein translocation channel SecYEG. Consists of two halves formed by TMs 1-5 and 6-10. These two domains form a lateral gate at the front which open onto the bilayer between TMs 2 and 7, and are clamped together by SecE at the back. The channel is closed by both a pore ring composed of hydrophobic SecY resides and a short helix (helix 2A) on the extracellular side of the membrane which forms a plug. The plug probably moves laterally to allow the channel to open. The ring and the pore may move independently. This Vibrio cholerae serotype O1 (strain ATCC 39315 / El Tor Inaba N16961) protein is Protein translocase subunit SecY.